The chain runs to 850 residues: Mitogen-activated protein kinase kinase kinase 11 (850 aa).

S11 carries the post-translational modification Phosphoserine. A compositionally biased stretch (gly residues) spans 18-31; it reads GSGSGGGGGSGGVR. A disordered region spans residues 18-37; the sequence is GSGSGGGGGSGGVRPEGSPK. At S35 the chain carries Phosphoserine. An SH3 domain is found at 42–106; the sequence is YANPVWTALF…PSNYVSRGGG (65 aa). The 263-residue stretch at 118 to 380 folds into the Protein kinase domain; the sequence is LRLEEVIGIG…ASILQQLEAL (263 aa). Residues 124 to 132 and K145 contribute to the ATP site; that span reads IGIGGFGKV. The Proton acceptor role is filled by D242. Residue T278 is modified to Phosphothreonine; by autocatalysis. S282 is modified (phosphoserine; by autocatalysis and MAP4K1). S395 is subject to Phosphoserine. Leucine-zipper stretches follow at residues 404–425 and 439–460; these read IQGLFDELRAKEKELLSREEEL and LRRREHLLAQWELEVFERELTL. S508, S525, S549, S556, and S557 each carry phosphoserine. The disordered stretch occupies residues 536–850; sequence LEPAESGQTW…QAPWAPEAGP (315 aa). Positions 551-563 are enriched in basic and acidic residues; it reads RRLDDSSNGERRA. A compositionally biased stretch (low complexity) spans 598 to 610; the sequence is SSPLGSPSTPPAL. S655 carries the post-translational modification Phosphoserine. Residues 677–693 show a composition bias toward pro residues; sequence TAPPPAQMASPCPPDLP. At T712 the chain carries Phosphothreonine. Phosphoserine occurs at positions 728, 731, 743, 751, 761, 773, 792, 796, and 818. Positions 790–802 are enriched in pro residues; that stretch reads RPSPLPSPQPAPR. Low complexity predominate over residues 803–819; sequence RAPWTLFPDSDPFWDSP.

It belongs to the protein kinase superfamily. STE Ser/Thr protein kinase family. MAP kinase kinase kinase subfamily. Homodimer; undergoes dimerization during activation. Interacts with MAP2K4/MKK4. Interacts with MAP2K7/MKK7. Found in a complex with SH3RF1, RAC1, MAP2K7/MKK7, MAPK8IP1/JIP1 and MAPK8/JNK1. It depends on Mg(2+) as a cofactor. In terms of processing, autophosphorylation on serine and threonine residues within the activation loop plays a role in enzyme activation. Thr-278 is likely to be the main autophosphorylation site. Phosphorylation of Ser-556 and Ser-557 is induced by CDC42.

The protein resides in the cytoplasm. Its subcellular location is the cytoskeleton. It localises to the microtubule organizing center. It is found in the centrosome. It catalyses the reaction L-seryl-[protein] + ATP = O-phospho-L-seryl-[protein] + ADP + H(+). The catalysed reaction is L-threonyl-[protein] + ATP = O-phospho-L-threonyl-[protein] + ADP + H(+). With respect to regulation, homodimerization via the leucine zipper domains is required for autophosphorylation and subsequent activation. In terms of biological role, activates the JUN N-terminal pathway. Required for serum-stimulated cell proliferation and for mitogen and cytokine activation of MAPK14 (p38), MAPK3 (ERK) and MAPK8 (JNK1) through phosphorylation and activation of MAP2K4/MKK4 and MAP2K7/MKK7. Plays a role in mitogen-stimulated phosphorylation and activation of BRAF, but does not phosphorylate BRAF directly. Influences microtubule organization during the cell cycle. The sequence is that of Mitogen-activated protein kinase kinase kinase 11 (Map3k11) from Rattus norvegicus (Rat).